An 824-amino-acid chain; its full sequence is Glycophorin-binding protein 130 (824 aa).

The PEXEL motif signature appears at 84–88 (RILAE). 11 disordered regions span residues 97 to 236 (EKTT…GQIM), 258 to 291 (NTDPNDEVERRNADNKEDLTSADPEGQIMREYAS), 310 to 334 (DPNDDVERRNADNKEDLTSADPEGQ), 358 to 384 (NTDPNDEVERRNADNKEDLTSADPEGQ), 408 to 431 (NTDPNDEVERRNADNKELTSSDPE), 457 to 482 (NTDPNDEVERRNADNKEDLTSADPEG), 507 to 532 (NTDPNDEVERRNADNKEDLTSADPEG), 559 to 582 (DPNDEVERRNADNKEDLTSADPEG), 659 to 683 (DPNDEVERRNADNKEDLTSADPEGQ), 711 to 733 (NDEVERRNADNKEDLTSADPEGQ), and 759 to 783 (DPNDDVERRNADNKEDLTSADPEGQ). Composition is skewed to basic and acidic residues over residues 117–140 (TKKDEENKSVVTEEQKVESDSEKQ) and 174–198 (KKEESGKPEENKHANEASKKQEPKA). A compositionally biased stretch (polar residues) spans 200–228 (KVSQKPSTSTRSNNEVKIRAASNQETLTS). 12 GBP repeats span residues 226 to 275 (LTSA…NKED), 276 to 325 (LTSA…NKED), 326 to 375 (LTSA…NKED), 376 to 424 (LTSA…DNKE), 425 to 474 (LTSS…NKED), 475 to 524 (LTSA…NKED), 525 to 574 (LTSA…NKED), 575 to 624 (LTSA…NKEE), 625 to 674 (LTSS…NKED), 675 to 724 (LTSA…NKED), 725 to 774 (LTSA…NKED), and 775 to 824 (LTSA…NNEA). 10 stretches are compositionally biased toward basic and acidic residues: residues 264 to 276 (EVERRNADNKEDL), 314 to 326 (DVERRNADNKEDL), 364 to 376 (EVERRNADNKEDL), 414 to 426 (EVERRNADNKELT), 463 to 475 (EVERRNADNKEDL), 513 to 525 (EVERRNADNKEDL), 563 to 575 (EVERRNADNKEDL), 663 to 675 (EVERRNADNKEDL), 713 to 725 (EVERRNADNKEDL), and 763 to 775 (DVERRNADNKEDL).

In terms of assembly, interacts with host glycophorin.

Its subcellular location is the secreted. It localises to the cell surface. The protein localises to the host cytoplasm. Its function is as follows. Involved in merozoite invasion of host erythrocytes. The protein is Glycophorin-binding protein 130 of Plasmodium falciparum (isolate 3D7).